The primary structure comprises 232 residues: Histone H1B (232 aa).

The segment covering 1-18 has biased composition (low complexity); the sequence is MSDPAVEVTPAVPVASPA. Disordered stretches follow at residues 1–44 and 99–232; these read MSDP…PPVS and QTKG…AKKA. One can recognise an H15 domain in the interval 39-113; it reads THPPVSEMVV…GASGSFKLPA (75 aa). 5 stretches are compositionally biased toward basic residues: residues 132–141, 147–173, 181–197, 205–214, and 222–232; these read KPKKAAAKPK, KVKK…KTTK, AAKK…KPKA, KRAAAPKAKK, and KAAKKPAAKKA.

It belongs to the histone H1/H5 family.

It localises to the nucleus. Its subcellular location is the chromosome. Functionally, histones H1 are necessary for the condensation of nucleosome chains into higher-order structures. The sequence is that of Histone H1B from Chironomus tentans (Midge).